We begin with the raw amino-acid sequence, 429 residues long: E3 ubiquitin-protein ligase ZNRF4 (429 aa).

An N-terminal signal peptide occupies residues 1–27; that stretch reads MPLCRPEHLMPRASRVPVAASLPLSHA. Over 28 to 250 the chain is Lumenal; sequence VIPTQLPSRP…PPCHDLGCHP (223 aa). Positions 30–67 are disordered; the sequence is PTQLPSRPGHRPPGRPRRCPKASCLPPPVGPSSTQTAK. A compositionally biased stretch (basic residues) spans 37 to 49; that stretch reads PGHRPPGRPRRCP. N-linked (GlcNAc...) asparagine glycosylation is found at N107, N152, and N229. One can recognise a PA domain in the interval 151-223; the sequence is GNRSLGAIVL…VSEAASQDLR (73 aa). A helical transmembrane segment spans residues 251 to 271; that stretch reads VLTVSWVLGCTLALVVSAFFV. Residues 272–429 lie on the Cytoplasmic side of the membrane; the sequence is LNHLWLWAQA…SSAPPEAPGQ (158 aa). The segment at 309 to 352 adopts an RING-type; atypical zinc-finger fold; sequence CAICLDEYEEGDQLKILPCSHTYHCKCIDPWFSQAPRRSCPVCK.

In terms of assembly, interacts with CANX.

The protein localises to the endoplasmic reticulum membrane. The catalysed reaction is S-ubiquitinyl-[E2 ubiquitin-conjugating enzyme]-L-cysteine + [acceptor protein]-L-lysine = [E2 ubiquitin-conjugating enzyme]-L-cysteine + N(6)-ubiquitinyl-[acceptor protein]-L-lysine.. Its pathway is protein modification; protein ubiquitination. Functionally, E3 ubiquitin-protein ligase that acts as a negative regulator of NOD2 signaling by mediating ubiquitination and degradation of RIPK2. Also catalyzes ubiquitination and proteasomal degradation of CANX within the endoplasmic reticulum. Could have a role in spermatogenesis. This chain is E3 ubiquitin-protein ligase ZNRF4, found in Homo sapiens (Human).